We begin with the raw amino-acid sequence, 930 residues long: Urea transporter 2 (930 aa).

Basic and acidic residues predominate over residues 1–11 (MSDHHPLKEMS). Positions 1-90 (MSDHHPLKEM…KRRESEVSRR (90 aa)) are disordered. Composition is skewed to low complexity over residues 12–25 (DSNSSPLLPEPLSS) and 32–43 (SELSSPTWPSSS). Residues 56 to 89 (PEEKDLRSSDEDSHIVKIEKPNERNKRRESEVSR) show a composition bias toward basic and acidic residues. 8 consecutive transmembrane segments (helical) span residues 145–165 (ISGLIIFIGLLIQNPWWTIAG), 185–205 (AIASGLHGYNGMLVGLLMAVF), 213–233 (WWLLFPVTFTSMACPIISSAL), 242–262 (LPVFTLPFNIALTLYLAATGH), 280–300 (NITWTEIEMPLLLQTIPVGVG), 311–331 (GGVILVALFISSPLICLHAAI), 350–372 (IYLGLWSYNCVLSCIAIGGMFYA), and 401–421 (VVGVPSGTWAFCLSTLTFLLL). The disordered stretch occupies residues 452–479 (SEEEKSPNGGSGEQSHGSGQWKAEESSE). Ser-487 is subject to Phosphoserine. The next 4 helical transmembrane spans lie at 610–630 (GILIVLGLFVQNPWWAISGCL), 648–668 (AIAAGLHGYNGVLVGLLMAVF), 676–696 (WWLLLPVIVMSMTCPILSSAL), and 705–725 (LPVFTLPFNIAVTLYLAATGH). An N-linked (GlcNAc...) asparagine glycan is attached at Asn-743. 4 consecutive transmembrane segments (helical) span residues 774 to 794 (GGIFLVALFISSPLICLHAAI), 813 to 833 (IYFGLCGFNSTLACIAIGGMF), 842 to 862 (LLAIACALFAAYLGAALANML), and 864 to 884 (VFGLPPCTWPFCLSALTFLLL).

It belongs to the urea transporter family. In terms of tissue distribution, highly expressed in kidney medulla (at protein level). Also detected in testes, heart, brain and liver (at protein level). In the kidney, present in thin descending limbs of the loop of Henle and in the middle and terminal inner medullary collecting ducts. Expressed in the kidney medulla. As to expression, expressed in the peritubular myoid cells forming the outermost layer of the seminiferous tubules within the testes and is not detected in kidney. Expression levels are coordinated with the stage of testes development and increase 15 days postpartum, commensurate with the start of seminiferous tubule fluid movement.

It localises to the apical cell membrane. The protein localises to the basolateral cell membrane. It carries out the reaction urea(in) = urea(out). Its activity is regulated as follows. Inhibited by phloretin. Activated by forskolin, 3-isobutyl-1-methylxanthine (IBMX) and cAMP. Inhibited by phloretin. With respect to regulation, inhibited by phloretin. Activated by forskolin, 3-isobutyl-1-methylxanthine (IBMX) and cAMP. Its function is as follows. Mediates the transport of urea driven by a concentration gradient across the cell membrane of the renal inner medullary collecting duct which is critical to the urinary concentrating mechanism. Functionally, mediates the transport of urea driven by a concentration gradient across the cell membrane. Implicated in the urea movement across the blood-testis barrier and does not translocate water. This is Urea transporter 2 (Slc14a2) from Mus musculus (Mouse).